We begin with the raw amino-acid sequence, 621 residues long: MALLQISEPGKSLAPHQRRIAVGIDLGTTNSLVAIVQDALPKVLPDEQGRELLPSVVRYLPNGRTQAGFEALESVVIDPKNTILSVKRFMGRGISDVENIESAPYDFVDQPGMLKLRTVAGDKSPIEVSAEILARLRQLAEDSVNDDIVGAVITVPAYFDDAQRQATKDAAKLAGIEVLRLLNEPTAAAIAYGLDNATEGVYAVYDLGGGTFDISILRMSKGVFEVLSTGGDSALGGDDFDHRLYCWVIEQAKLPPLSIHDHRTLLQACKHAKELLSHNPLARVHETLADGTVVNVGISQAQLFEITQNLVSKTLVACKKALRDAGLKAEDIKGVVMVGGSTRMPNVQRAVGELFGTKPLNNLNPDQVVALGAAMQADLLAGNQSKDDEWLLLDVIPLSLGIETMGGLVEKIIPRNTPIPVARAQDFTTFKDGQTALAIQVVQGERELAQDCRSLGRFELRGIPPMAAGAARIRVTFQVDADGLLSVSATEIGSGVKASIDIKPSYGLTDGEITRMLQEGFSSAKEDLLARSLREEQVSAQRLLDAVQTALSTDRALLNEQEQAAIDQEMAQLQKILNEETDSSVVRKAVDHAAKATDEFAQKRMNASIQKALSGKNVAEI.

Belongs to the heat shock protein 70 family.

Chaperone involved in the maturation of iron-sulfur cluster-containing proteins. Has a low intrinsic ATPase activity which is markedly stimulated by HscB. This chain is Chaperone protein HscA homolog, found in Polynucleobacter asymbioticus (strain DSM 18221 / CIP 109841 / QLW-P1DMWA-1) (Polynucleobacter necessarius subsp. asymbioticus).